The following is a 341-amino-acid chain: Arfaptin-2 (341 aa).

Residues 46-85 (NETSIVSGGYGGSGDGLIPTGSGRHPSHSTTPSGPGDEVA) form a disordered region. Ser72 is subject to Phosphoserine. At Thr76 the chain carries Phosphothreonine. In terms of domain architecture, AH spans 121 to 321 (TVDLELELQI…NQKQLEQTLQ (201 aa)).

Forms homodimers or heterodimers with ARFIP1. Interacts with RAC1. Specifically binds to GTP-bound ARF1 and ARF6, but binds to RAC1.GTP and RAC1.GDP with similar affinities. Interacts with ARL1. Interacts (via N-terminus) with IKBKB and IKBKG; these interactions inhibit activation of NF-kappa-B.

It localises to the golgi apparatus. Its subcellular location is the trans-Golgi network membrane. Plays a role in constitutive metalloproteinase (MMP) secretion from the trans Golgi network. May have important functions during vesicle biogenesis at certain cargo subdomains, which could be predominantly utilized by secreted MMPs, such as MMP7 and MMP2. Also involved in autophagy by regulating the starvation-dependent trafficking of ATG9A vesicles which deliver the phosphatidylinositol 4-kinase beta (PI4KB) to the autophagosome initiation site. Involved in phagophore growth during mitophagy by regulating ATG9A trafficking to mitochondria. In addition, plays a role in NF-kappa-B inhibition by interacting with IKBKB and IKBKG. The sequence is that of Arfaptin-2 from Homo sapiens (Human).